We begin with the raw amino-acid sequence, 219 residues long: Regulator of rDNA transcription 14 (219 aa).

Basic and acidic residues predominate over residues 153–176 (EVRRRKSYRDEEREEAEFRSEVEK). Positions 153–219 (EVRRRKSYRD…KEEEEDQFSE (67 aa)) are disordered. Acidic residues predominate over residues 194–219 (SDDEDDEEEDESDGFDKEEEEDQFSE).

It belongs to the RRT14 family.

It localises to the nucleus. The protein localises to the nucleolus. Functionally, involved in ribosome biogenesis, probably through modulation of rDNA transcription. The sequence is that of Regulator of rDNA transcription 14 (RRT14) from Komagataella phaffii (strain GS115 / ATCC 20864) (Yeast).